Reading from the N-terminus, the 276-residue chain is MKFSKMHSLGNDFVIVNNIDKKNNISPIFIKKLSDRYTGIGFDQLILIEFFCKKYFYFKIKIFNSDSSESFQCINGIRCVFMFLKIKKLIKKNIAFIGNNLGLSKTLMTKNKLICVKIKPPRFYIEKDILVNPKYNNKEKIILRIFKKKITCYFVFVGNPHCIIISKNIEYNNFSLLSKYLLKNNIFPNKINISIMNILDFDLIKLKVYERGSGETQSCGSAAAAAAAVAIYYKKLNKKIKVNFSRGNLYVYWEKIGNFMSIIGPANHIYDGKINF.

Residues Asn-11, Gln-44, and Asn-64 each contribute to the substrate site. Cys-73 (proton donor) is an active-site residue. Substrate contacts are provided by residues Ile-74–Asn-75, Asn-159, Asn-192, and Glu-210–Arg-211. Cys-219 acts as the Proton acceptor in catalysis. Gly-220–Ser-221 contacts substrate.

Belongs to the diaminopimelate epimerase family. As to quaternary structure, homodimer.

It localises to the cytoplasm. The catalysed reaction is (2S,6S)-2,6-diaminopimelate = meso-2,6-diaminopimelate. It participates in amino-acid biosynthesis; L-lysine biosynthesis via DAP pathway; DL-2,6-diaminopimelate from LL-2,6-diaminopimelate: step 1/1. In terms of biological role, catalyzes the stereoinversion of LL-2,6-diaminopimelate (L,L-DAP) to meso-diaminopimelate (meso-DAP), a precursor of L-lysine and an essential component of the bacterial peptidoglycan. This is Diaminopimelate epimerase from Wigglesworthia glossinidia brevipalpis.